We begin with the raw amino-acid sequence, 149 residues long: Cytochrome c-type biogenesis protein CcmE (149 aa).

Residues 1–7 (MTRKQKR) lie on the Cytoplasmic side of the membrane. A helical; Signal-anchor for type II membrane protein transmembrane segment spans residues 8–28 (LAVIAGGMGFIATAVLLVLFA). The Periplasmic portion of the chain corresponds to 29–149 (FSQSVAYFYM…GVWKGEEASQ (121 aa)). 2 residues coordinate heme: H123 and Y127.

It belongs to the CcmE/CycJ family.

The protein resides in the cell inner membrane. Its function is as follows. Heme chaperone required for the biogenesis of c-type cytochromes. Transiently binds heme delivered by CcmC and transfers the heme to apo-cytochromes in a process facilitated by CcmF and CcmH. This chain is Cytochrome c-type biogenesis protein CcmE, found in Rhizobium rhizogenes (strain K84 / ATCC BAA-868) (Agrobacterium radiobacter).